A 370-amino-acid polypeptide reads, in one-letter code: Prolactin-releasing peptide receptor (370 aa).

Residues 1–62 (MASLPTQGPA…LQLVHQLKGL (62 aa)) are Extracellular-facing. N-linked (GlcNAc...) asparagine glycans are attached at residues Asn-27 and Asn-36. The chain crosses the membrane as a helical span at residues 63–83 (IVLLYSIVVVVGLVGNCLLVL). Residues 84 to 101 (VIARVRRLHNVTNFLIGN) lie on the Cytoplasmic side of the membrane. The chain crosses the membrane as a helical span at residues 102–122 (LALSDVLMCTACVPLTLAYAF). Residues 123–126 (EPRG) are Extracellular-facing. A helical membrane pass occupies residues 127 to 147 (WVFGGGLCHLVFFLQPVTVYV). A disulfide bridge links Cys-134 with Cys-211. The Cytoplasmic portion of the chain corresponds to 148-175 (SVFTLTTIAVDRYVVLVHPLRRRISLRF). Residues 176-196 (SAYAVLAIWALSAVLALPAAL) form a helical membrane-spanning segment. The Extracellular portion of the chain corresponds to 197–225 (HTYHVELKPHRVRLCEEFWGSQERQRQLY). Residues 226-246 (AWGLLLVTYLLPLLVILLSYV) traverse the membrane as a helical segment. At 247–276 (RVSVNLRNRVVPGCVTQSQADWDRARRRRT) the chain is on the cytoplasmic side. The helical transmembrane segment at 277–297 (FCLLVVVVVVFAVCWLPLHVF) threads the bilayer. Residues 298-317 (NLLRDLDPHAIDPYAFGLVQ) lie on the Extracellular side of the membrane. The chain crosses the membrane as a helical span at residues 318-338 (LLCHWLAMSSACYNPFIYAWL). Residues 339–369 (HDSFREELRKLLLAWPRKIAPHGQSMTVSVV) are Cytoplasmic-facing. Residues 365 to 370 (TVSVVI) are required for interaction with GRIP1, GRIP2 and PICK1.

The protein belongs to the G-protein coupled receptor 1 family. In terms of assembly, interacts through its C-terminal region with the PDZ domain-containing proteins GRIP1, GRIP2 and PICK1. Interacts with PDZ domains 4 and 5 of GRIP1 and with the PDZ domain of PICK1.

It localises to the cell membrane. Receptor for prolactin-releasing peptide (PrRP). Implicated in lactation, regulation of food intake and pain-signal processing. The polypeptide is Prolactin-releasing peptide receptor (PRLHR) (Bos taurus (Bovine)).